A 374-amino-acid chain; its full sequence is MAKRDYYEVLGVNRNATEAEVKKAFRRLAMKYHPDRNPGDKDAEVKFKEAREAYEVLCDSRKRASYDQFGHAGVEQTFGGAGAGGFGFGDLGDIFGDIFGDIFGGARGGQAREQRGADLAYELVLSLEEAVHGLSRTIKVPTWINCKTCNGSGAKGSSPATCPRCNGSGQMRMQHGFLQVQQTCSVCRGRGQVIKDPCTDCHGQGRQQQTKTLSVKIPPGIDTGDRIRLAGEGEAGLFGAPPGDLYVQVRVKPHPLFHREGNDLHSEVPMDFTTAALGGEMEIPTLDGSVRLTIPPETQGGKQFRLRGKGVKALRSGAVGDLICHIVVETPVKLSPEQKDYLKQFAELLKKDEKNHSPRTRNWFDSVKDFFTSK.

Residues Asp-5–Gly-70 form the J domain. The CR-type zinc-finger motif lies at Gly-133–Thr-210. The Zn(2+) site is built by Cys-146, Cys-149, Cys-162, Cys-165, Cys-184, Cys-187, Cys-198, and Cys-201. CXXCXGXG motif repeat units follow at residues Cys-146–Gly-153, Cys-162–Gly-169, Cys-184–Gly-191, and Cys-198–Gly-205.

The protein belongs to the DnaJ family. As to quaternary structure, homodimer. Zn(2+) serves as cofactor.

The protein resides in the cytoplasm. In terms of biological role, participates actively in the response to hyperosmotic and heat shock by preventing the aggregation of stress-denatured proteins and by disaggregating proteins, also in an autonomous, DnaK-independent fashion. Unfolded proteins bind initially to DnaJ; upon interaction with the DnaJ-bound protein, DnaK hydrolyzes its bound ATP, resulting in the formation of a stable complex. GrpE releases ADP from DnaK; ATP binding to DnaK triggers the release of the substrate protein, thus completing the reaction cycle. Several rounds of ATP-dependent interactions between DnaJ, DnaK and GrpE are required for fully efficient folding. Also involved, together with DnaK and GrpE, in the DNA replication of plasmids through activation of initiation proteins. This chain is Chaperone protein DnaJ, found in Coxiella burnetii (strain CbuG_Q212) (Coxiella burnetii (strain Q212)).